We begin with the raw amino-acid sequence, 492 residues long: Proline--tRNA ligase (492 aa).

Belongs to the class-II aminoacyl-tRNA synthetase family. ProS type 3 subfamily. As to quaternary structure, homodimer.

The protein resides in the cytoplasm. The catalysed reaction is tRNA(Pro) + L-proline + ATP = L-prolyl-tRNA(Pro) + AMP + diphosphate. In terms of biological role, catalyzes the attachment of proline to tRNA(Pro) in a two-step reaction: proline is first activated by ATP to form Pro-AMP and then transferred to the acceptor end of tRNA(Pro). This chain is Proline--tRNA ligase, found in Christiangramia forsetii (strain DSM 17595 / CGMCC 1.15422 / KT0803) (Gramella forsetii).